Consider the following 64-residue polypeptide: Large ribosomal subunit protein uL29 (64 aa).

This sequence belongs to the universal ribosomal protein uL29 family.

This Paraburkholderia phytofirmans (strain DSM 17436 / LMG 22146 / PsJN) (Burkholderia phytofirmans) protein is Large ribosomal subunit protein uL29.